The sequence spans 677 residues: Methionine--tRNA ligase (677 aa).

The short motif at 15–25 (PYANGSIHLGH) is the 'HIGH' region element. Positions 146, 149, 159, and 162 each coordinate Zn(2+). The short motif at 333–337 (KMSKS) is the 'KMSKS' region element. Lys-336 lines the ATP pocket. Residues 575-677 (DFAKVDLRVA…EGAKPGQQVK (103 aa)) form the tRNA-binding domain.

Belongs to the class-I aminoacyl-tRNA synthetase family. MetG type 1 subfamily. In terms of assembly, homodimer. Zn(2+) is required as a cofactor.

It is found in the cytoplasm. It carries out the reaction tRNA(Met) + L-methionine + ATP = L-methionyl-tRNA(Met) + AMP + diphosphate. Functionally, is required not only for elongation of protein synthesis but also for the initiation of all mRNA translation through initiator tRNA(fMet) aminoacylation. This chain is Methionine--tRNA ligase, found in Enterobacter sp. (strain 638).